We begin with the raw amino-acid sequence, 69 residues long: MEMAYWVMVMMMVWITAPLSEGGKLNDVIRALAPDDVTPQFILRSLISRRRSDSDVREVPVCSWKICPP.

Residues 1–22 form the signal peptide; the sequence is MEMAYWVMVMMMVWITAPLSEG. Residues 23–57 constitute a propeptide that is removed on maturation; it reads GKLNDVIRALAPDDVTPQFILRSLISRRRSDSDVR. Glu-58 is modified (4-carboxyglutamate). Residues Cys-62 and Cys-67 are joined by a disulfide bond. Residue Trp-64 is modified to D-tryptophan. 4-hydroxyproline occurs at positions 68 and 69.

The protein belongs to the conotoxin C superfamily. Consomatin family. In terms of tissue distribution, expressed by the venom duct.

The protein localises to the secreted. Its function is as follows. Moderately activates human somatostatin receptors (SSTR) with a preferential activation of SSTR1 and SSTR4. In vivo, does not cause behavioral changes in mice within a few minutes of intracranial injection, but causes a progressive loss of movement thereafter. Four to five hours after injection, mice recover, even with the highest dose tested. Shows antinociception and antihyperalgesia activities in two mouse models of acute pain, most probably by acting outside the central nervous system. This chain is Consomatin Be1, found in Conus betulinus (Beech cone).